We begin with the raw amino-acid sequence, 79 residues long: D-alanyl carrier protein (79 aa).

A Carrier domain is found at 1 to 77 (MDVKAEVIEI…KIVEGVTELR (77 aa)). Position 35 is an O-(pantetheine 4'-phosphoryl)serine (serine 35).

Belongs to the DltC family. Post-translationally, 4'-phosphopantetheine is transferred from CoA to a specific serine of apo-DCP.

The protein localises to the cytoplasm. It functions in the pathway cell wall biogenesis; lipoteichoic acid biosynthesis. Carrier protein involved in the D-alanylation of lipoteichoic acid (LTA). The loading of thioester-linked D-alanine onto DltC is catalyzed by D-alanine--D-alanyl carrier protein ligase DltA. The DltC-carried D-alanyl group is further transferred to cell membrane phosphatidylglycerol (PG) by forming an ester bond, probably catalyzed by DltD. D-alanylation of LTA plays an important role in modulating the properties of the cell wall in Gram-positive bacteria, influencing the net charge of the cell wall. This is D-alanyl carrier protein from Streptococcus thermophilus (strain CNRZ 1066).